The sequence spans 89 residues: Small ribosomal subunit protein uS15 (89 aa).

This sequence belongs to the universal ribosomal protein uS15 family. Part of the 30S ribosomal subunit. Forms a bridge to the 50S subunit in the 70S ribosome, contacting the 23S rRNA.

In terms of biological role, one of the primary rRNA binding proteins, it binds directly to 16S rRNA where it helps nucleate assembly of the platform of the 30S subunit by binding and bridging several RNA helices of the 16S rRNA. Functionally, forms an intersubunit bridge (bridge B4) with the 23S rRNA of the 50S subunit in the ribosome. This chain is Small ribosomal subunit protein uS15, found in Hyphomonas neptunium (strain ATCC 15444).